A 937-amino-acid polypeptide reads, in one-letter code: MAAAVPRLTSGGAVRIRIRCGELGTTKWREGVIEIQERDNKINLLVKFNSGGAPRVFQLSHNVKSVSWFQTHGPNRMTLTLKDSCIVMMDKLNMLVAKKMKEYLETVKLGKPAVFKTNQGSASFGLVLGNRTAQNDSGLSPSDKQSAPRRSSLDSREDSTPRKPLGSPSRVTSTPARGSLSEIRSEKRKRLMNSDGDLTEDYPKENDSSSNNKAITDSSRKFLLSCKDKLKQSEENRASAPHTPAPLQPTSFYGSRTGAKDYTQTHSFLDRPSSTGSCPSAKRSLVLPNHSTPFKKVRPTLDYGGWNKPRPSVLAQPQPPLQGFSNLGNTCYMNAILQSLFSLPSFSNDLLKQGIPWKRVPINALLRRFAHLLAKKDISPPEVKKDLLRRVKNAISSTAERFSGYMQNDAHEFLSQCLDQLKEDVEKINKSWKNEPSAWDEPQSTRLADEVDTSRIYTCPVTVNMEFEVQHTITCKSCGEVVLKREQFNDLSIDLPRRRKTLPMRSIQDSLDLFFRMEEIEYSCEKCSGKAATVSHKFSRLPRVLILHLKRYSYNTQLSLNSKLGQQVLIPKYLTLLSHCTDATRSPLSLGWSAQNALSRTLKISQSVNSSTLRRASQRPESSGSVLCDSDSDEELVRKVARKHHPDDDRADELQQHHPHAAVEQSEFNGINDEEMLAAVLEMSRHDTSLCAGPDEEPSSSPDTGFGDADAHDLTQHLELLDAEKQPTDALESLDLTMDENKENQTPDGLQGELDWVQQYSLEQEREEQELQQALAQSLQEQEAREMREDDDLKRATELSLQEFNNSLPELLCSDEDSGNEDGLDMEYSEAEAEELKKNAETGELPNSFRLISVVSHIGSSSSSGHYISDVYDMKKQSWLTYNDLDVSRTQESTVQRDRDRSGYIFFYMHKDVFEELSELEKAGVNTDGGRTVLQPL.

Positions 38–40 (RDN) match the KEN box 1 motif. 2 short sequence motifs (D-box) span residues 76-84 (RMTLTLKDS) and 101-110 (KEYLETVKLG). A compositionally biased stretch (polar residues) spans 132 to 149 (TAQNDSGLSPSDKQSAPR). Disordered stretches follow at residues 132-216 (TAQN…KAIT) and 232-258 (QSEENRASAPHTPAPLQPTSFYGSRTG). Basic and acidic residues predominate over residues 151–161 (SSLDSREDSTP). The D-box 3 signature appears at 162–170 (RKPLGSPSR). Positions 204–206 (KEN) match the KEN box 2 motif. A USP domain is found at 322–911 (QGFSNLGNTC…SGYIFFYMHK (590 aa)). The active-site Nucleophile is C331. Polar residues predominate over residues 609 to 625 (NSSTLRRASQRPESSGS). Disordered regions lie at residues 609 to 632 (NSSTLRRASQRPESSGSVLCDSDS) and 688 to 710 (TSLCAGPDEEPSSSPDTGFGDAD). The 20-residue stretch at 672–691 (NDEEMLAAVLEMSRHDTSLC) folds into the UIM 1 domain. Positions 742 to 744 (KEN) match the KEN box 3 motif. 2 UIM domains span residues 766–785 (REEQELQQALAQSLQEQEAR) and 788–807 (REDDDLKRATELSLQEFNNS). The active-site Proton acceptor is the H866.

Belongs to the peptidase C19 family.

The enzyme catalyses Thiol-dependent hydrolysis of ester, thioester, amide, peptide and isopeptide bonds formed by the C-terminal Gly of ubiquitin (a 76-residue protein attached to proteins as an intracellular targeting signal).. Functionally, deubiquitinase that antagonizes the anaphase-promoting complex (APC/C) during G1/S transition by mediating deubiquitination of APC/C target proteins, thereby promoting S phase entry. Specifically mediates deubiquitination of 'Lys-11'-linked polyubiquitin chains, a specific ubiquitin-linkage type mediated by the APC/C complex. The polypeptide is Ubiquitin carboxyl-terminal hydrolase 37 (usp37) (Danio rerio (Zebrafish)).